Reading from the N-terminus, the 533-residue chain is Leucine-rich glioma-inactivated protein 1 (533 aa).

A signal peptide spans 1–34; it reads MESERSQRMGNACIPLKRIAYCLCLLSALLLTEG. An LRRNT domain is found at 35–72; that stretch reads KKPAKPKCPAVCTCTKDNALCENARSIPRTVPPDVISL. 2 LRR repeats span residues 92–113 and 116–137; these read HLEY…TFRG and SLIH…IFKG. The LRRCT domain occupies 149 to 199; sequence NSFNCDCKLKWLVEWLSHTNATVEDIYCEGPPEYKKRKINSLSSKDFDCII. Residue Asn168 is glycosylated (N-linked (GlcNAc...) asparagine). EAR repeat units follow at residues 201-243, 247-289, 293-340, 342-391, 395-438, 440-482, and 486-528; these read EFAK…EWDH, TFRN…KRDS, KFIK…KWNG, GFYS…QWNK, LFTN…KWGG, SFQD…NWDA, and KFVK…KHVI. An N-linked (GlcNAc...) asparagine glycan is attached at Asn253. N-linked (GlcNAc...) asparagine glycosylation occurs at Asn398.

In terms of assembly, oligomer. Interacts with KCNA1 within a complex containing KCNA1, KCNA4 and KCNAB1. Part of a complex containing ADAM22, DLG4/PSD95 and CACNG2 (stargazin). Can bind to ADAM11 and ADAM23. Glycosylated.

It localises to the secreted. Its subcellular location is the synapse. It is found in the cytoplasm. Its function is as follows. Regulates voltage-gated potassium channels assembled from KCNA1, KCNA4 and KCNAB1. It slows down channel inactivation by precluding channel closure mediated by the KCNAB1 subunit. Ligand for ADAM22 that positively regulates synaptic transmission mediated by AMPA-type glutamate receptors. Plays a role in suppressing the production of MMP1/3 through the phosphatidylinositol 3-kinase/ERK pathway. This Bos taurus (Bovine) protein is Leucine-rich glioma-inactivated protein 1 (LGI1).